A 334-amino-acid chain; its full sequence is D-fructose 1,6-bisphosphatase class 2/sedoheptulose 1,7-bisphosphatase (334 aa).

Residues D33, E57, D85, and E88 each contribute to the Mn(2+) site. Substrate contacts are provided by residues 88–90, Y119, 164–166, and 186–188; these read EGT, RAR, and DGD. E213 is a binding site for Mn(2+).

It belongs to the FBPase class 2 family. As to quaternary structure, homotetramer. Mn(2+) is required as a cofactor.

The enzyme catalyses beta-D-fructose 1,6-bisphosphate + H2O = beta-D-fructose 6-phosphate + phosphate. It catalyses the reaction D-sedoheptulose 1,7-bisphosphate + H2O = D-sedoheptulose 7-phosphate + phosphate. Its pathway is carbohydrate biosynthesis; Calvin cycle. In terms of biological role, catalyzes the hydrolysis of fructose 1,6-bisphosphate (Fru 1,6-P2) and sedoheptulose 1,7-bisphosphate (Sed 1,7-P2) to fructose 6-phosphate and sedoheptulose 7-phosphate, respectively. In Prochlorococcus marinus (strain MIT 9303), this protein is D-fructose 1,6-bisphosphatase class 2/sedoheptulose 1,7-bisphosphatase.